A 349-amino-acid chain; its full sequence is Lipoyl synthase (349 aa).

The [4Fe-4S] cluster site is built by C55, C60, C66, C81, C85, C88, and S292. Residues 67-281 (WESREATFLI…ADFARELGFG (215 aa)) form the Radical SAM core domain.

Belongs to the radical SAM superfamily. Lipoyl synthase family. [4Fe-4S] cluster serves as cofactor.

It localises to the cytoplasm. It catalyses the reaction [[Fe-S] cluster scaffold protein carrying a second [4Fe-4S](2+) cluster] + N(6)-octanoyl-L-lysyl-[protein] + 2 oxidized [2Fe-2S]-[ferredoxin] + 2 S-adenosyl-L-methionine + 4 H(+) = [[Fe-S] cluster scaffold protein] + N(6)-[(R)-dihydrolipoyl]-L-lysyl-[protein] + 4 Fe(3+) + 2 hydrogen sulfide + 2 5'-deoxyadenosine + 2 L-methionine + 2 reduced [2Fe-2S]-[ferredoxin]. It participates in protein modification; protein lipoylation via endogenous pathway; protein N(6)-(lipoyl)lysine from octanoyl-[acyl-carrier-protein]: step 2/2. Catalyzes the radical-mediated insertion of two sulfur atoms into the C-6 and C-8 positions of the octanoyl moiety bound to the lipoyl domains of lipoate-dependent enzymes, thereby converting the octanoylated domains into lipoylated derivatives. The chain is Lipoyl synthase from Corynebacterium diphtheriae (strain ATCC 700971 / NCTC 13129 / Biotype gravis).